We begin with the raw amino-acid sequence, 156 residues long: Transcriptional repressor NrdR (156 aa).

A zinc finger lies at 3-34; the sequence is CPFCQHDDTQVLDTRISEEGDSIRRRRRCVSC. Positions 49–139 constitute an ATP-cone domain; sequence PVIVKKNGSR…VYKSFEDVAE (91 aa).

This sequence belongs to the NrdR family. Requires Zn(2+) as cofactor.

In terms of biological role, negatively regulates transcription of bacterial ribonucleotide reductase nrd genes and operons by binding to NrdR-boxes. The protein is Transcriptional repressor NrdR of Herminiimonas arsenicoxydans.